The primary structure comprises 265 residues: MQYGDQTTFKQSLAIQGRVINALLMREIITRYGRKNIGFLWLFVEPLLMTFFIVMMWKFIRADKFSTLNMIAFVMTGYPMAMMWRNASNRAIGSISANLSLLYHRNVRVLDTIFTRVLLEVAGASIAQILFMAVLVLIGWIDAPRDVFYMLMAWFLMAMFAFALGLIICAVAQQFDVFGKIWGTLSFVLLPISGAFFFVHNLPSQAQSIALWLPMIHGTEMFRHGYFGDTVVTYESIGFLVVSDLALLLMGLVMVKNFSKGIEPQ.

A run of 6 helical transmembrane segments spans residues 37–57, 64–84, 121–141, 148–168, 178–198, and 235–255; these read IGFLWLFVEPLLMTFFIVMMW, KFSTLNMIAFVMTGYPMAMMW, VAGASIAQILFMAVLVLIGWI, FYMLMAWFLMAMFAFALGLII, FGKIWGTLSFVLLPISGAFFF, and ESIGFLVVSDLALLLMGLVMV. The region spanning 37–258 is the ABC transmembrane type-2 domain; it reads IGFLWLFVEP…LMGLVMVKNF (222 aa).

This sequence belongs to the ABC-2 integral membrane protein family.

The protein resides in the cell inner membrane. May form an ATP-driven capsule polysaccharide export apparatus, in association with the BexA, BexC and BexD proteins. This Haemophilus influenzae protein is Capsule polysaccharide export inner-membrane protein BexB (bexB).